The primary structure comprises 296 residues: 4-hydroxybenzoate octaprenyltransferase (296 aa).

8 consecutive transmembrane segments (helical) span residues 28-48 (PIGIYLLLWPTLWALWIAGKG), 52-72 (LINIVIFVLGVVLTRAGGCVI), 102-122 (ALVFFAVLMGISFLLVLLTNA), 146-166 (YYPQVVLGAAFSWGMPMAFTA), 169-189 (GDLPATAWLLYIANLLWTVGY), 219-239 (VIILTLQGLSLVCLLLAGARF), 241-261 (LGGWFHLGLLAAAGCFAWEFW), and 275-295 (FLHNHWAGLAIFVGIVADYAF).

The protein belongs to the UbiA prenyltransferase family. It depends on Mg(2+) as a cofactor.

The protein localises to the cell inner membrane. It carries out the reaction all-trans-octaprenyl diphosphate + 4-hydroxybenzoate = 4-hydroxy-3-(all-trans-octaprenyl)benzoate + diphosphate. It functions in the pathway cofactor biosynthesis; ubiquinone biosynthesis. Catalyzes the prenylation of para-hydroxybenzoate (PHB) with an all-trans polyprenyl group. Mediates the second step in the final reaction sequence of ubiquinone-8 (UQ-8) biosynthesis, which is the condensation of the polyisoprenoid side chain with PHB, generating the first membrane-bound Q intermediate 3-octaprenyl-4-hydroxybenzoate. The chain is 4-hydroxybenzoate octaprenyltransferase from Pseudomonas fluorescens (strain SBW25).